The chain runs to 395 residues: Enolase (395 aa).

Substrate is bound by residues H136 and E145. The active-site Proton donor is E188. Residues D223, E271, and D296 each coordinate Mg(2+). Substrate is bound by residues E271 and D296. Catalysis depends on K321, which acts as the Proton acceptor. Residues 348–351 (SHRS) and K372 contribute to the substrate site.

Belongs to the enolase family. In terms of assembly, homodimer. Requires Mg(2+) as cofactor.

The protein resides in the cytoplasm. The catalysed reaction is (2R)-2-phosphoglycerate = phosphoenolpyruvate + H2O. It functions in the pathway carbohydrate degradation; glycolysis; pyruvate from D-glyceraldehyde 3-phosphate: step 4/5. The polypeptide is Enolase (Alligator mississippiensis (American alligator)).